The following is a 381-amino-acid chain: Mannitol-1-phosphate 5-dehydrogenase (381 aa).

NAD(+) is bound at residue 3-14 (AVHFGAGNIGRG).

This sequence belongs to the mannitol dehydrogenase family.

It catalyses the reaction D-mannitol 1-phosphate + NAD(+) = beta-D-fructose 6-phosphate + NADH + H(+). The sequence is that of Mannitol-1-phosphate 5-dehydrogenase from Photobacterium profundum (strain SS9).